The chain runs to 81 residues: UPF0180 protein RBAM_013970 (81 aa).

This sequence belongs to the UPF0180 family.

The chain is UPF0180 protein RBAM_013970 from Bacillus velezensis (strain DSM 23117 / BGSC 10A6 / LMG 26770 / FZB42) (Bacillus amyloliquefaciens subsp. plantarum).